We begin with the raw amino-acid sequence, 234 residues long: Phosphoribosylaminoimidazole-succinocarboxamide synthase (234 aa).

Belongs to the SAICAR synthetase family.

It carries out the reaction 5-amino-1-(5-phospho-D-ribosyl)imidazole-4-carboxylate + L-aspartate + ATP = (2S)-2-[5-amino-1-(5-phospho-beta-D-ribosyl)imidazole-4-carboxamido]succinate + ADP + phosphate + 2 H(+). The protein operates within purine metabolism; IMP biosynthesis via de novo pathway; 5-amino-1-(5-phospho-D-ribosyl)imidazole-4-carboxamide from 5-amino-1-(5-phospho-D-ribosyl)imidazole-4-carboxylate: step 1/2. The sequence is that of Phosphoribosylaminoimidazole-succinocarboxamide synthase from Clostridium botulinum (strain ATCC 19397 / Type A).